A 316-amino-acid chain; its full sequence is Aspartate carbamoyltransferase catalytic subunit (316 aa).

Residues Arg56 and Thr57 each contribute to the carbamoyl phosphate site. Lys84 contacts L-aspartate. Positions 106, 139, and 142 each coordinate carbamoyl phosphate. Arg172 and Arg226 together coordinate L-aspartate. Positions 267 and 268 each coordinate carbamoyl phosphate.

Belongs to the aspartate/ornithine carbamoyltransferase superfamily. ATCase family. In terms of assembly, heterododecamer (2C3:3R2) of six catalytic PyrB chains organized as two trimers (C3), and six regulatory PyrI chains organized as three dimers (R2).

It catalyses the reaction carbamoyl phosphate + L-aspartate = N-carbamoyl-L-aspartate + phosphate + H(+). Its pathway is pyrimidine metabolism; UMP biosynthesis via de novo pathway; (S)-dihydroorotate from bicarbonate: step 2/3. Its function is as follows. Catalyzes the condensation of carbamoyl phosphate and aspartate to form carbamoyl aspartate and inorganic phosphate, the committed step in the de novo pyrimidine nucleotide biosynthesis pathway. This is Aspartate carbamoyltransferase catalytic subunit from Mycobacterium sp. (strain JLS).